Consider the following 69-residue polypeptide: MMATGTVKWFNATKGFGFIQPDDGSADVFVHISAVERAGLRELKDGQKISYELVKDRKSGKMSADNLQA.

The 61-residue stretch at 5 to 65 (GTVKWFNATK…DRKSGKMSAD (61 aa)) folds into the CSD domain.

The protein resides in the cytoplasm. The polypeptide is Probable cold shock protein y4cH (Sinorhizobium fredii (strain NBRC 101917 / NGR234)).